A 35-amino-acid polypeptide reads, in one-letter code: Photosystem II reaction center protein M (35 aa).

The chain crosses the membrane as a helical span at residues Gly-7–Ile-27.

The protein belongs to the PsbM family. In terms of assembly, PSII is composed of 1 copy each of membrane proteins PsbA, PsbB, PsbC, PsbD, PsbE, PsbF, PsbH, PsbI, PsbJ, PsbK, PsbL, PsbM, PsbT, PsbX, PsbY, PsbZ, Psb30/Ycf12, peripheral proteins PsbO, CyanoQ (PsbQ), PsbU, PsbV and a large number of cofactors. It forms dimeric complexes.

The protein localises to the cellular thylakoid membrane. In terms of biological role, one of the components of the core complex of photosystem II (PSII). PSII is a light-driven water:plastoquinone oxidoreductase that uses light energy to abstract electrons from H(2)O, generating O(2) and a proton gradient subsequently used for ATP formation. It consists of a core antenna complex that captures photons, and an electron transfer chain that converts photonic excitation into a charge separation. This subunit is found at the monomer-monomer interface. In Synechococcus elongatus (strain ATCC 33912 / PCC 7942 / FACHB-805) (Anacystis nidulans R2), this protein is Photosystem II reaction center protein M.